Here is a 352-residue protein sequence, read N- to C-terminus: Cobalt transport protein NhlF (352 aa).

The next 8 membrane-spanning stretches (helical) occupy residues 23-43 (LASV…LYLG), 46-66 (GNPA…VLGV), 95-115 (VGFF…LVVA), 131-151 (EIGG…VAGL), 206-226 (PVGL…LLTL), 230-250 (AATG…LFAA), 290-310 (VIGL…LPMF), and 323-343 (FEFL…GALL).

The protein belongs to the NiCoT transporter (TC 2.A.52) family.

The protein resides in the cell membrane. Cobalt uptake is inhibited by uncouplers (CCCP and 3,5-di-tert-butyl-4-hydroxybenzylidenemalononitrile) and by the addition of excess nickel. Mediates energy-dependent uptake of cobalt ions into the cell. Can also transport nickel ions, but cobalt is the preferred substrate. In Rhodococcus rhodochrous, this protein is Cobalt transport protein NhlF (nhlF).